The primary structure comprises 358 residues: Myb family transcription factor APL (358 aa).

One can recognise an HTH myb-type domain in the interval 31-91 (TDPKPRLRWT…HLQKFRLGKQ (61 aa)). Residues 62–87 (PKTIMRVMGVKGLTLYHLKSHLQKFR) constitute a DNA-binding region (H-T-H motif). Residues 125 to 145 (RNMNEMQMEVQRRLHEQLEVQ) adopt a coiled-coil conformation. Residues 138-143 (LHEQLE) carry the LHEQLE motif. The segment at 313–358 (RKSGLSGDEGNNGGKLLERPSPRRSPLSPMMNPNGGLIQGRNSPFG) is disordered.

It belongs to the MYB-CC family. Expressed in shoots and roots, specifically in the developing protophloem sieve elements. Detected in phloem and/or cambium. Expressed in the phloem tissues of various organs, including leaves and cotyledons, during vegetative growth.

It localises to the nucleus. In terms of biological role, transcription factor required for phloem identity. Has a dual role both in promoting phloem differentiation and in repressing xylem differentiation during vascular development. Regulates the expression of the transcription factor NAC045 (AC A4VCM0). May activate the transcription of specific genes involved in phosphate uptake or assimilation. Promotes flowering through transcriptional activation of both FT and its transport machinery component, FTIP1. The protein is Myb family transcription factor APL of Arabidopsis thaliana (Mouse-ear cress).